The sequence spans 66 residues: Photosystem II reaction center protein J (66 aa).

A helical transmembrane segment spans residues 37 to 57 (LWLVATAGGMAVLFVVGLFFY).

It belongs to the PsbJ family. In terms of assembly, PSII is composed of 1 copy each of membrane proteins PsbA, PsbB, PsbC, PsbD, PsbE, PsbF, PsbH, PsbI, PsbJ, PsbK, PsbL, PsbM, PsbT, PsbX, PsbY, PsbZ, Psb30/Ycf12, peripheral proteins PsbO, CyanoQ (PsbQ), PsbU, PsbV and a large number of cofactors. It forms dimeric complexes.

The protein localises to the cellular thylakoid membrane. Functionally, one of the components of the core complex of photosystem II (PSII). PSII is a light-driven water:plastoquinone oxidoreductase that uses light energy to abstract electrons from H(2)O, generating O(2) and a proton gradient subsequently used for ATP formation. It consists of a core antenna complex that captures photons, and an electron transfer chain that converts photonic excitation into a charge separation. The chain is Photosystem II reaction center protein J from Synechococcus sp. (strain WH7803).